We begin with the raw amino-acid sequence, 119 residues long: Immunoglobulin heavy variable 2-70 (119 aa).

Positions 1 to 19 (MDILCSTLLLLTVPSWVLS) are cleaved as a signal peptide. At Gln20 the chain carries Pyrrolidone carboxylic acid. The interval 20 to 44 (QVTLRESGPALVKPTQTLTLTCTFS) is framework-1. The 100-residue stretch at 20–119 (QVTLRESGPA…DTATYYCARI (100 aa)) folds into the Ig-like domain. Residues Cys41 and Cys116 are joined by a disulfide bond. The segment at 45–54 (GFSLSTSGMC) is complementarity-determining-1. The interval 55–71 (VSWIRQPPGKALEWLAL) is framework-2. A complementarity-determining-2 region spans residues 72 to 78 (IDWDDDK). The framework-3 stretch occupies residues 79-116 (YYSTSLKTRLTISKDTSKNQVVLTMTNMDPVDTATYYC). The interval 117 to 119 (ARI) is complementarity-determining-3.

As to quaternary structure, immunoglobulins are composed of two identical heavy chains and two identical light chains; disulfide-linked.

It localises to the secreted. The protein localises to the cell membrane. V region of the variable domain of immunoglobulin heavy chains that participates in the antigen recognition. Immunoglobulins, also known as antibodies, are membrane-bound or secreted glycoproteins produced by B lymphocytes. In the recognition phase of humoral immunity, the membrane-bound immunoglobulins serve as receptors which, upon binding of a specific antigen, trigger the clonal expansion and differentiation of B lymphocytes into immunoglobulins-secreting plasma cells. Secreted immunoglobulins mediate the effector phase of humoral immunity, which results in the elimination of bound antigens. The antigen binding site is formed by the variable domain of one heavy chain, together with that of its associated light chain. Thus, each immunoglobulin has two antigen binding sites with remarkable affinity for a particular antigen. The variable domains are assembled by a process called V-(D)-J rearrangement and can then be subjected to somatic hypermutations which, after exposure to antigen and selection, allow affinity maturation for a particular antigen. The sequence is that of Immunoglobulin heavy variable 2-70 from Homo sapiens (Human).